The chain runs to 81 residues: Putative defensin-like protein 31 (81 aa).

The first 26 residues, Met-1–Ala-26, serve as a signal peptide directing secretion. Intrachain disulfides connect Cys-38-Cys-58, Cys-44-Cys-70, and Cys-48-Cys-72.

Belongs to the DEFL family.

It is found in the secreted. The sequence is that of Putative defensin-like protein 31 from Arabidopsis thaliana (Mouse-ear cress).